A 147-amino-acid polypeptide reads, in one-letter code: D-aminoacyl-tRNA deacylase (147 aa).

Residues 137 to 138 (GP) carry the Gly-cisPro motif, important for rejection of L-amino acids motif.

Belongs to the DTD family. In terms of assembly, homodimer.

Its subcellular location is the cytoplasm. The catalysed reaction is glycyl-tRNA(Ala) + H2O = tRNA(Ala) + glycine + H(+). It carries out the reaction a D-aminoacyl-tRNA + H2O = a tRNA + a D-alpha-amino acid + H(+). Its function is as follows. An aminoacyl-tRNA editing enzyme that deacylates mischarged D-aminoacyl-tRNAs. Also deacylates mischarged glycyl-tRNA(Ala), protecting cells against glycine mischarging by AlaRS. Acts via tRNA-based rather than protein-based catalysis; rejects L-amino acids rather than detecting D-amino acids in the active site. By recycling D-aminoacyl-tRNA to D-amino acids and free tRNA molecules, this enzyme counteracts the toxicity associated with the formation of D-aminoacyl-tRNA entities in vivo and helps enforce protein L-homochirality. This Jannaschia sp. (strain CCS1) protein is D-aminoacyl-tRNA deacylase.